Reading from the N-terminus, the 89-residue chain is Large ribosomal subunit protein bL27 (89 aa).

The interval 1–21 (MAHKKAGGSSRNGRDSESKRL) is disordered.

It belongs to the bacterial ribosomal protein bL27 family.

The chain is Large ribosomal subunit protein bL27 from Chelativorans sp. (strain BNC1).